Here is a 492-residue protein sequence, read N- to C-terminus: Glycylpeptide N-tetradecanoyltransferase 2 (492 aa).

Residues 1-77 are disordered; sequence MAEDSESAAS…SASDSQEIKN (77 aa). Residues 15 to 32 show a composition bias toward acidic residues; it reads ELDDQDTCGIDGDNEEEN. The segment covering 46–57 has biased composition (basic residues); sequence KKKKKKQKRKKE. Over residues 61–72 the composition is skewed to polar residues; that stretch reads SGGTKSDSASDS. 8 residues coordinate tetradecanoyl-CoA: histidine 111, tryptophan 116, leucine 244, valine 246, serine 252, arginine 254, valine 255, and alanine 256.

Belongs to the NMT family.

It is found in the cytoplasm. It localises to the membrane. It catalyses the reaction N-terminal glycyl-[protein] + tetradecanoyl-CoA = N-tetradecanoylglycyl-[protein] + CoA + H(+). It carries out the reaction N-terminal glycyl-L-lysyl-[protein] + tetradecanoyl-CoA = N-terminal glycyl-(N(6)-tetradecanoyl)-L-lysyl-[protein] + CoA + H(+). Adds a myristoyl group to the N-terminal glycine residue of certain cellular and viral proteins. Also able to mediate N-terminal lysine myristoylation of proteins. The sequence is that of Glycylpeptide N-tetradecanoyltransferase 2 from Danio rerio (Zebrafish).